The primary structure comprises 229 residues: Ribonuclease 3 (229 aa).

Residues 7 to 132 (LRAFESRIGH…VIAAVYLDAG (126 aa)) form the RNase III domain. E45 contributes to the Mg(2+) binding site. Residue D49 is part of the active site. Residues D118 and E121 each contribute to the Mg(2+) site. The active site involves E121. Residues 157-226 (DAKTALQEWA…ARALLARMEA (70 aa)) enclose the DRBM domain.

This sequence belongs to the ribonuclease III family. Homodimer. Mg(2+) serves as cofactor.

It is found in the cytoplasm. The enzyme catalyses Endonucleolytic cleavage to 5'-phosphomonoester.. In terms of biological role, digests double-stranded RNA. Involved in the processing of primary rRNA transcript to yield the immediate precursors to the large and small rRNAs (23S and 16S). Processes some mRNAs, and tRNAs when they are encoded in the rRNA operon. Processes pre-crRNA and tracrRNA of type II CRISPR loci if present in the organism. This is Ribonuclease 3 from Cereibacter sphaeroides (strain ATCC 17025 / ATH 2.4.3) (Rhodobacter sphaeroides).